The following is a 351-amino-acid chain: Rhodopsin (351 aa).

Residues 1 to 36 (MNGTEGPYFYVPMVNTTGVVRSPYEYPQYYLVNPAA) lie on the Extracellular side of the membrane. N-linked (GlcNAc...) asparagine glycosylation is found at asparagine 2 and asparagine 15. The chain crosses the membrane as a helical span at residues 37–61 (FAVLGAYMFFLIIFGFPINFLTLYV). At 62-73 (TLEHKKLRTPLN) the chain is on the cytoplasmic side. Residues 74-96 (YILLNLAVADLFMVIGGFTTTMY) form a helical membrane-spanning segment. Topologically, residues 97–110 (SSMHGYFVLGRLGC) are extracellular. An intrachain disulfide couples cysteine 110 to cysteine 187. The helical transmembrane segment at 111 to 133 (NLEGFSATLGGMISLWSLAVLAI) threads the bilayer. Residues 134–136 (ERW) carry the 'Ionic lock' involved in activated form stabilization motif. At 134-152 (ERWVVVCKPTSNFRFGENH) the chain is on the cytoplasmic side. Residues 153–173 (AIMGVSLTWTMALACTVPPLV) form a helical membrane-spanning segment. Over 174 to 202 (GWSRYIPEGMQCSCGIDYYTRAEGFNNES) the chain is Extracellular. Asparagine 200 is a glycosylation site (N-linked (GlcNAc...) asparagine). Residues 203-224 (FVLYMFFCHFMVPLIIIFFCYG) form a helical membrane-spanning segment. Over 225–252 (RLLCAVKEAAAAQQESETTQRAEREVTR) the chain is Cytoplasmic. Residues 253-274 (MVILMVIGYLVCWLPYASVAWF) form a helical membrane-spanning segment. The Extracellular segment spans residues 275 to 286 (IFTHQGSEFGPL). A helical transmembrane segment spans residues 287–308 (FMTIPAFFAKSSSIYNPVIYIC). Lysine 296 carries the post-translational modification N6-(retinylidene)lysine. Topologically, residues 309–351 (MNKQFRNCMITTLFCGKNPFEGEEEGASSTKTEASSASSVSPA) are cytoplasmic. Cysteine 323 carries the S-palmitoyl cysteine lipid modification. The tract at residues 330–351 (GEEEGASSTKTEASSASSVSPA) is disordered. Residues 335–351 (ASSTKTEASSASSVSPA) show a composition bias toward low complexity.

This sequence belongs to the G-protein coupled receptor 1 family. Opsin subfamily. In terms of processing, phosphorylated on some or all of the serine and threonine residues present in the C-terminal region. Contains one covalently linked retinal chromophore.

The protein localises to the membrane. The protein resides in the cell projection. It localises to the cilium. Its subcellular location is the photoreceptor outer segment. In terms of biological role, photoreceptor required for image-forming vision at low light intensity. While most salt water fish species use retinal as chromophore, most freshwater fish use 3-dehydroretinal, or a mixture of retinal and 3-dehydroretinal. Light-induced isomerization of 11-cis to all-trans retinal triggers a conformational change that activates signaling via G-proteins. Subsequent receptor phosphorylation mediates displacement of the bound G-protein alpha subunit by arrestin and terminates signaling. This is Rhodopsin (rho) from Neoniphon sammara (Spotfin squirrelfish).